Here is a 475-residue protein sequence, read N- to C-terminus: Glutamate--tRNA ligase 2 (475 aa).

The 'HIGH' region signature appears at 11–21 (PSPTGFLHIGG). The segment covering 116-133 (AEGRPPRYDGTWRDKDPA) has biased composition (basic and acidic residues). Positions 116–137 (AEGRPPRYDGTWRDKDPAEAPS) are disordered. The 'KMSKS' region signature appears at 240 to 244 (KLSKR). An ATP-binding site is contributed by Lys-243.

This sequence belongs to the class-I aminoacyl-tRNA synthetase family. Glutamate--tRNA ligase type 1 subfamily. Monomer.

The protein localises to the cytoplasm. It carries out the reaction tRNA(Glu) + L-glutamate + ATP = L-glutamyl-tRNA(Glu) + AMP + diphosphate. Its function is as follows. Catalyzes the attachment of glutamate to tRNA(Glu) in a two-step reaction: glutamate is first activated by ATP to form Glu-AMP and then transferred to the acceptor end of tRNA(Glu). The sequence is that of Glutamate--tRNA ligase 2 from Chelativorans sp. (strain BNC1).